A 177-amino-acid polypeptide reads, in one-letter code: Large ribosomal subunit protein uL6 (177 aa).

This sequence belongs to the universal ribosomal protein uL6 family. Part of the 50S ribosomal subunit.

Functionally, this protein binds to the 23S rRNA, and is important in its secondary structure. It is located near the subunit interface in the base of the L7/L12 stalk, and near the tRNA binding site of the peptidyltransferase center. The chain is Large ribosomal subunit protein uL6 from Rhizobium leguminosarum bv. trifolii (strain WSM2304).